The following is an 87-amino-acid chain: U-scoloptoxin(23)-Er1a (87 aa).

An N-terminal signal peptide occupies residues 1 to 29; the sequence is MSLIVVRTHSFLFVLVLLLFASVFHSVDS. Positions 32–54 are disordered; it reads FNPNGRYGRRDSASALSDASENK.

This sequence belongs to the scoloptoxin-23 family. Expressed by the venom gland.

The protein localises to the secreted. This is U-scoloptoxin(23)-Er1a from Ethmostigmus rubripes (Giant centipede).